The chain runs to 195 residues: Pyruvoyl-dependent arginine decarboxylase AaxB (195 aa).

Position 53 is a pyruvic acid (Ser) (Ser53).

This sequence belongs to the pyruvoyl-dependent arginine decarboxylase family. In terms of assembly, trimer of an alpha-beta dimer. It depends on pyruvate as a cofactor.

It localises to the cytoplasm. It carries out the reaction L-arginine + H(+) = agmatine + CO2. Part of the AaxABC system, catalyzes the decarboxylation of L-arginine. The arginine uptake by the bacterium in the macrophage may be a virulence factor against the host innate immune response. This is Pyruvoyl-dependent arginine decarboxylase AaxB (aaxB) from Chlamydia trachomatis serovar D (strain ATCC VR-885 / DSM 19411 / UW-3/Cx).